The following is an 88-amino-acid chain: U-scoloptoxin(01)-Tl1a (88 aa).

An N-terminal signal peptide occupies residues 1–16 (MSVYGLLSLLIFIVLA). In terms of domain architecture, Chitin-binding type-2 spans 25 to 81 (GKDCSEKEEYLYDSSNCDIFYECDESLKPQRMMCGPGTGWNQDKLVCDFLTNIDCTR). Residues cysteine 58 and cysteine 71 are joined by a disulfide bond.

It belongs to the scoloptoxin-01 family. Contains 3 disulfide bonds. As to expression, expressed by the venom gland.

The protein resides in the secreted. The protein is U-scoloptoxin(01)-Tl1a of Thereuopoda longicornis (Long-legged centipede).